The primary structure comprises 69 residues: Dermaseptin-H3 (69 aa).

The signal sequence occupies residues Met1–Cys22. Residues Glu23–Met43 constitute a propeptide that is removed on maturation. Positions Glu24 to Lys44 are disordered. The segment covering Glu30–Gln40 has biased composition (acidic residues). The residue at position 66 (Leu66) is a Leucine amide. Positions Glu68 to Gln69 are excised as a propeptide.

It belongs to the frog skin active peptide (FSAP) family. Dermaseptin subfamily. As to expression, expressed by the skin glands.

The protein resides in the secreted. Possesses a potent antimicrobial activity against Gram-positive and Gram-negative bacteria. Probably acts by disturbing membrane functions with its amphipathic structure. The polypeptide is Dermaseptin-H3 (Pithecopus azureus (Orange-legged monkey tree frog)).